Here is a 309-residue protein sequence, read N- to C-terminus: Ribosomal RNA small subunit methyltransferase H (309 aa).

S-adenosyl-L-methionine is bound by residues 33–35, aspartate 53, phenylalanine 79, aspartate 100, and glutamine 107; that span reads GGH.

The protein belongs to the methyltransferase superfamily. RsmH family.

Its subcellular location is the cytoplasm. It carries out the reaction cytidine(1402) in 16S rRNA + S-adenosyl-L-methionine = N(4)-methylcytidine(1402) in 16S rRNA + S-adenosyl-L-homocysteine + H(+). In terms of biological role, specifically methylates the N4 position of cytidine in position 1402 (C1402) of 16S rRNA. The polypeptide is Ribosomal RNA small subunit methyltransferase H (Clostridium botulinum (strain 657 / Type Ba4)).